Here is a 310-residue protein sequence, read N- to C-terminus: Mitochondrial thiamine pyrophosphate carrier 1 (310 aa).

The next 6 helical transmembrane spans lie at 16–32, 88–104, 117–141, 173–197, 218–234, and 274–291; these read VSPY…GGVA, ILYV…YSAL, IVMP…LTTY, GISG…LMFW, ICGF…TFPL, and GYGV…ISLW. 3 Solcar repeats span residues 16–107, 120–205, and 211–299; these read VSPY…LSKS, PSSV…AREF, and HVPF…VISA.

This sequence belongs to the mitochondrial carrier (TC 2.A.29) family.

It is found in the mitochondrion inner membrane. Mitochondrial transporter that mediates uptake of thiamine pyrophosphate (ThPP) into mitochondria. This chain is Mitochondrial thiamine pyrophosphate carrier 1 (TPC1), found in Lodderomyces elongisporus (strain ATCC 11503 / CBS 2605 / JCM 1781 / NBRC 1676 / NRRL YB-4239) (Yeast).